The following is a 265-amino-acid chain: Glutamate racemase (265 aa).

Substrate contacts are provided by residues 12–13 and 44–45; these read DS and YG. Catalysis depends on Cys75, which acts as the Proton donor/acceptor. Substrate is bound at residue 76–77; sequence NT. The Proton donor/acceptor role is filled by Cys186. A substrate-binding site is contributed by 187 to 188; that stretch reads TH.

This sequence belongs to the aspartate/glutamate racemases family.

The enzyme catalyses L-glutamate = D-glutamate. Its pathway is cell wall biogenesis; peptidoglycan biosynthesis. Functionally, provides the (R)-glutamate required for cell wall biosynthesis. The chain is Glutamate racemase from Pseudomonas aeruginosa (strain UCBPP-PA14).